Reading from the N-terminus, the 148-residue chain is Small ribosomal subunit protein uS15 (148 aa).

The disordered stretch occupies residues 1-23 (MRKSKEKGRSGSTRPPQLKKPEW).

It belongs to the universal ribosomal protein uS15 family. As to quaternary structure, part of the 30S ribosomal subunit.

This Thermofilum pendens (strain DSM 2475 / Hrk 5) protein is Small ribosomal subunit protein uS15.